Here is a 111-residue protein sequence, read N- to C-terminus: Large ribosomal subunit protein eL34B (111 aa).

Tyrosine 76 bears the Phosphotyrosine mark.

It belongs to the eukaryotic ribosomal protein eL34 family. Component of the large ribosomal subunit (LSU). Mature yeast ribosomes consist of a small (40S) and a large (60S) subunit. The 40S small subunit contains 1 molecule of ribosomal RNA (18S rRNA) and at least 33 different proteins. The large 60S subunit contains 3 rRNA molecules (25S, 5.8S and 5S rRNA) and at least 46 different proteins.

The protein localises to the cytoplasm. The protein resides in the nucleus. It is found in the nucleolus. In terms of biological role, component of the ribosome, a large ribonucleoprotein complex responsible for the synthesis of proteins in the cell. The small ribosomal subunit (SSU) binds messenger RNAs (mRNAs) and translates the encoded message by selecting cognate aminoacyl-transfer RNA (tRNA) molecules. The large subunit (LSU) contains the ribosomal catalytic site termed the peptidyl transferase center (PTC), which catalyzes the formation of peptide bonds, thereby polymerizing the amino acids delivered by tRNAs into a polypeptide chain. The nascent polypeptides leave the ribosome through a tunnel in the LSU and interact with protein factors that function in enzymatic processing, targeting, and the membrane insertion of nascent chains at the exit of the ribosomal tunnel. In Schizosaccharomyces pombe (strain 972 / ATCC 24843) (Fission yeast), this protein is Large ribosomal subunit protein eL34B (rpl3402).